The sequence spans 182 residues: Large ribosomal subunit protein uL6 (182 aa).

It belongs to the universal ribosomal protein uL6 family. As to quaternary structure, part of the 50S ribosomal subunit.

Its function is as follows. This protein binds to the 23S rRNA, and is important in its secondary structure. It is located near the subunit interface in the base of the L7/L12 stalk, and near the tRNA binding site of the peptidyltransferase center. The protein is Large ribosomal subunit protein uL6 of Carboxydothermus hydrogenoformans (strain ATCC BAA-161 / DSM 6008 / Z-2901).